Reading from the N-terminus, the 552-residue chain is Dihydroxy-acid dehydratase (552 aa).

Asp-78 is a Mg(2+) binding site. Cys-119 lines the [2Fe-2S] cluster pocket. Residues Asp-120 and Lys-121 each contribute to the Mg(2+) site. At Lys-121 the chain carries N6-carboxylysine. Cys-191 is a [2Fe-2S] cluster binding site. Glu-442 is a binding site for Mg(2+). Residue Ser-468 is the Proton acceptor of the active site.

The protein belongs to the IlvD/Edd family. As to quaternary structure, homodimer. Requires [2Fe-2S] cluster as cofactor. The cofactor is Mg(2+).

The enzyme catalyses (2R)-2,3-dihydroxy-3-methylbutanoate = 3-methyl-2-oxobutanoate + H2O. It catalyses the reaction (2R,3R)-2,3-dihydroxy-3-methylpentanoate = (S)-3-methyl-2-oxopentanoate + H2O. The protein operates within amino-acid biosynthesis; L-isoleucine biosynthesis; L-isoleucine from 2-oxobutanoate: step 3/4. Its pathway is amino-acid biosynthesis; L-valine biosynthesis; L-valine from pyruvate: step 3/4. In terms of biological role, functions in the biosynthesis of branched-chain amino acids. Catalyzes the dehydration of (2R,3R)-2,3-dihydroxy-3-methylpentanoate (2,3-dihydroxy-3-methylvalerate) into 2-oxo-3-methylpentanoate (2-oxo-3-methylvalerate) and of (2R)-2,3-dihydroxy-3-methylbutanoate (2,3-dihydroxyisovalerate) into 2-oxo-3-methylbutanoate (2-oxoisovalerate), the penultimate precursor to L-isoleucine and L-valine, respectively. This Clostridium botulinum (strain Alaska E43 / Type E3) protein is Dihydroxy-acid dehydratase.